Reading from the N-terminus, the 529-residue chain is Glycerol kinase 5 (529 aa).

ATP is bound by residues T22 and T23. 3 residues coordinate glycerol: R92, D269, and Q270. 3 residues coordinate ATP: T291, G334, and G434.

It belongs to the FGGY kinase family.

The protein localises to the cytoplasm. It catalyses the reaction glycerol + ATP = sn-glycerol 3-phosphate + ADP + H(+). It functions in the pathway polyol metabolism; glycerol degradation via glycerol kinase pathway; sn-glycerol 3-phosphate from glycerol: step 1/1. Functionally, skin-specific kinase that plays a key role in glycerol metabolism, catalyzing its phosphorylation to produce sn-glycerol 3-phosphate. Involved in skin-specific regulation of sterol regulatory element-binding protein (SREBP) processing and lipid biosynthesis. The chain is Glycerol kinase 5 (gk5) from Danio rerio (Zebrafish).